Reading from the N-terminus, the 598-residue chain is Trichothecene efflux pump TRI12 (598 aa).

The helical transmembrane segment at 42 to 62 (IVASFAAFSMNVVATYFVLQA) threads the bilayer. Residue N79 is glycosylated (N-linked (GlcNAc...) asparagine). Transmembrane regions (helical) follow at residues 109–129 (PFVILTHILGLVGAIVGCTAT) and 135–155 (LAAMTMLGVAAGPAGASPLFI). N-linked (GlcNAc...) asparagine glycosylation is present at N161. Helical transmembrane passes span 165–185 (FLGLLIVSAPVVATNGLSPYL), 197–217 (WIFYIYIIMSTIAVTLIIIWY), 241–261 (WIGIILVIAGTSLFLLGVSWG), 273–293 (VIGLISSGAGTLVIFALYEVY), 312–332 (FVCILIISSIMGSMHLSLVIM), 356–376 (ATASFGTGAGVVVLGSLFHLV), 381–401 (WQILVGAMWLTAFLGAMSSIN), 409–429 (IALSVMTGFVVAWAQDITMLL), 442–462 (AFAVVAAARPFAGSIFTAAFI), and 533–553 (ANVYYFAMALGVIPIIASLCM). A disordered region spans residues 579–598 (LEGNSESQPSPIILSMADKE).

Belongs to the major facilitator superfamily.

The protein resides in the cell membrane. Efflux pump that provides the dual role of trichothecene export and self-protection by allowing the fungus to evade the harmful effect of its own trichothecene production. This is Trichothecene efflux pump TRI12 from Fusarium sporotrichioides.